The sequence spans 64 residues: uncharacterized protein (64 aa).

The chain crosses the membrane as a helical span at residues 30 to 52 (FYAIFEMLFWPLVSLISVGLLGE).

It localises to the membrane. This is an uncharacterized protein from Archaeoglobus fulgidus (strain ATCC 49558 / DSM 4304 / JCM 9628 / NBRC 100126 / VC-16).